The following is a 535-amino-acid chain: PAC-1 interacting and coiled-coil domain-containing protein 1 (535 aa).

The interval 1-67 is disordered; the sequence is MIITTPRRAN…KQTPPRSPVI (67 aa). Positions 36–57 are enriched in low complexity; the sequence is SSTTPSSIGSSSSSSSSYASST. 2 coiled-coil regions span residues 109–172 and 198–242; these read KLQY…RDLS and SLMK…RQSL. 2 disordered regions span residues 254 to 277 and 503 to 535; these read NESE…NDEE and TCRP…HTHN. Over residues 503–525 the composition is skewed to polar residues; that stretch reads TCRPTTTLISSTQPAQRSVSVEK. Over residues 526–535 the composition is skewed to low complexity; sequence NNNNNVHTHN.

Belongs to the CCDC85 family. As to quaternary structure, interacts with pac-1 and jac-1.

The protein localises to the cell junction. It is found in the adherens junction. Its function is as follows. Linker protein which helps to recruit the Rho GTPase-activating protein, pac-1, to adherens junctions. The chain is PAC-1 interacting and coiled-coil domain-containing protein 1 from Caenorhabditis elegans.